The following is a 133-amino-acid chain: FPRL1 inhibitory protein (133 aa).

The signal sequence occupies residues 1 to 28; it reads MKKNITKTIIASTVIAAGLLTQTNDAKA.

It belongs to the CHIPS/FLIPr family.

Its subcellular location is the secreted. Its function is as follows. May be involved in countering the first line of host defense mechanisms. Impairs the leukocyte response to FPRL1 agonists by binding directly to host FPRL1. The chain is FPRL1 inhibitory protein (flr) from Staphylococcus aureus (strain USA300).